The following is a 425-amino-acid chain: 3-deoxy-D-manno-octulosonic acid transferase (425 aa).

A helical; Signal-anchor transmembrane segment spans residues 3–23; it reads ELLYTALLYLIQPLIWIRLWV. Glu-60 acts as the Proton acceptor in catalysis. CMP-binding positions include 268 to 269, 309 to 311, and 335 to 338; these read PR, MGE, and NPLE.

This sequence belongs to the glycosyltransferase group 1 family. Glycosyltransferase 30 subfamily.

Its subcellular location is the cell inner membrane. It catalyses the reaction lipid IVA (E. coli) + CMP-3-deoxy-beta-D-manno-octulosonate = alpha-Kdo-(2-&gt;6)-lipid IVA (E. coli) + CMP + H(+). The enzyme catalyses alpha-Kdo-(2-&gt;6)-lipid IVA (E. coli) + CMP-3-deoxy-beta-D-manno-octulosonate = alpha-Kdo-(2-&gt;4)-alpha-Kdo-(2-&gt;6)-lipid IVA (E. coli) + CMP + H(+). Its pathway is glycolipid biosynthesis; KDO(2)-lipid A biosynthesis; KDO(2)-lipid A from CMP-3-deoxy-D-manno-octulosonate and lipid IV(A): step 1/4. It functions in the pathway glycolipid biosynthesis; KDO(2)-lipid A biosynthesis; KDO(2)-lipid A from CMP-3-deoxy-D-manno-octulosonate and lipid IV(A): step 2/4. It participates in bacterial outer membrane biogenesis; LPS core biosynthesis. Its function is as follows. Involved in lipopolysaccharide (LPS) biosynthesis. Catalyzes the transfer of two 3-deoxy-D-manno-octulosonate (Kdo) residues from CMP-Kdo to lipid IV(A), the tetraacyldisaccharide-1,4'-bisphosphate precursor of lipid A. This chain is 3-deoxy-D-manno-octulosonic acid transferase (waaA), found in Escherichia coli O157:H7.